Here is a 313-residue protein sequence, read N- to C-terminus: Aspartate carbamoyltransferase catalytic subunit (313 aa).

The carbamoyl phosphate site is built by arginine 58 and threonine 59. Position 86 (lysine 86) interacts with L-aspartate. Residues arginine 108, histidine 136, and glutamine 139 each contribute to the carbamoyl phosphate site. Residues arginine 169 and arginine 224 each contribute to the L-aspartate site. The carbamoyl phosphate site is built by glycine 265 and proline 266.

This sequence belongs to the aspartate/ornithine carbamoyltransferase superfamily. ATCase family. Heterododecamer (2C3:3R2) of six catalytic PyrB chains organized as two trimers (C3), and six regulatory PyrI chains organized as three dimers (R2).

It carries out the reaction carbamoyl phosphate + L-aspartate = N-carbamoyl-L-aspartate + phosphate + H(+). The protein operates within pyrimidine metabolism; UMP biosynthesis via de novo pathway; (S)-dihydroorotate from bicarbonate: step 2/3. In terms of biological role, catalyzes the condensation of carbamoyl phosphate and aspartate to form carbamoyl aspartate and inorganic phosphate, the committed step in the de novo pyrimidine nucleotide biosynthesis pathway. The protein is Aspartate carbamoyltransferase catalytic subunit of Natranaerobius thermophilus (strain ATCC BAA-1301 / DSM 18059 / JW/NM-WN-LF).